The primary structure comprises 3251 residues: MEPEDLPWPDELEEEEEEEEEEGEEEEGKKEVENASAAATEEALTSEESGRLEEFEEAGPDLDFNYESQRQESSDEEEDELAKAWLQAHPDRPGSAFSLPPPTPPPPPPPLSPRLRYTPVEHLGKTEVVPLTCRVWQQSSYQDNSRAQFSNSSTMLLETGVRWGSEEDQRTESWHCLPQERDSSQTLAMSQTEIGRVEGTEVPDLPSQEGGLPAQSQCPGKKPKLNVLCSPLLVIQDNFAAPDLPLLTCLIQDQEEVEPDSLFQQSELEFAPLRGIPDKSEDSEWLARPSEVSEALIQATSETSSDLANSCFSISQHPLTEGLQGKAESGVLTRCGDAKYSSLYENLGAQSERIAVLQREVGCSNLGISQASPSSLPSFVPQEPTSEPEYHSSNLRMLRVSPDTLLTTHTHSAGSADQKIGAAVVSSAYSQEIKPGSFHQEELPDRHLNEEIRKVSPALRTAGQKPEMLPVQSSSYSKGMKSIFYQHPVSHGHQGKEPLSVSAVCGSAGNKAFHQLSTLSDSLLTEETWPVSVIPGLGNQKTPLPSEFSLSYSHRGKNLPEDVVKVSTDSGSAHKKADILTASSRTYQHKMKPANIYHQELPDSRVPIGTRKVAFESGPAGQKSGVSHPYGEMPSVFYQQGLPDRHSAKSPTKTFIPGPADQKTDLSPVPPTSSSHAEKPVSPYQLTLPGSHLPEDVFKASSVCKSSDELSGITALTSASYSYKGRPNSSYQQKFPDSHLNEEAQKILGTTGTVDQKTVTPTMSSSFLQKEKPSIFYQQTLPDGGLSEEDLQVSAVPWPADQNIAIPTVTSAAFSQREKPRIFYQQTLSVDRLPGEPLNVLGTSGPPDQNTGAPTVTPSSYFPGEESIIFYQAGFPGNTLSAMSFKVPRISGSTEQTNVTTGSSSSYSVGEKSIIFYHQALPDGRLPQEASPAPADLNTGEPPMYLASCSVGVKPIIFYQQPMSDSQRTKGHKESDVPGPTDQKTGIATVHSTSQSYIGRRTVSYQKEFPDLSEKALKVLGDVGSTEQKTQIPVVSSALLHKEGPSAYQEDLPDLTEEPLQILGVSEEVSSSSYQRKLPDHIEVFLKSVGSGSADRKTGAQIVSSSREKSSGFHQQELPNTGGDAVDAFHPEPVVQEVRKVQTPGAPAGPSSSHFHKEKLSDYQKASPHRDLTESSLKASTVPGLSDQKKKPAVSSGFCLHKEKHEISASALLNCQTAELLTVTQRSCLHREDPAISTVIKPDDQKIPLPTTFHGSSDQKVKPVIFVQKQLRDRDQSEDIPKISTVSEPTVVNTVLPVLLPGSYSHREKSDSFYPQELPDGHLTEVDLKVSSGLGQADQISGLPTGIPGTYSHSEKHQLISEHVQELMDNLNSSESSCLSVDSMPLNSQIDDGVIICKPESLGFANAGCEEMQNIDRGSKTLKEIQTLLMEAENMALKRCNFSVPLVPFRDVNDVSFIRSKKVVCFKESSTTDVCTQRESFVEEVPHIEYVQKDIGTQTNLKYQRGVGNWEFISSATFRSPLQEAEGTARMAYDETFRQYKAARSVMRSEPEGCSTGIGNKMIIPMMTIIKSDSSSDVSDGCCSWDNNLPESLESVSDVFLNFFPYTSPKTSITDSREEEWLSESEDGYGSTDSLAAHVKYLLQCETSLNQAKQILKNAEEEEYRVRTQAWNLKFNLGRDRGYSISELNEDDRRKVEEIKAKLFGHGRATHMSEGLRSPQGIGCLPEAVCSRIIIESHEKGCFRTLTAEQPRPDSCHCAFRSVEPSDLIRGHRSPSSWRGRHINLSRSIEQSNPCFKVGSSFQLQSHPPFQKLLPDDIKISKGVGMPVHAYMDPQPSELVEPTCVPAKEMDFPSSSQILPPEPKKQFTTAITFSSHEHSECISDSSGCKVGVTADSQCSGPSLGVFKPHIPEEQISPRDLKQKTSFQSSLERHGSTPVTILADGSRQRQKLPVDFEHSHQKEKLLQRLGFKVSHSEPNVSTNVSNFKGVQFSGKDTIVSQDKLTSTVEVKEKNVTVTPDLPSCIFLEQPELFEESHTPHTDLQMRKYPSPSCPEIASRIFLEQPKLSEQSKAPHVDREIREDHSFFPKCQDYIVADPSPDFPDQQQCKPPDVVGHTRKQNSLLSEGQDYELEEVQHIPQSYFSNMVNVEAKVSDAISQSAPDHCTAASTPPSNRKALSCVRITLCPKTSSKLDSGTLGERFHSLDPASKTRINSEFNSDLRIISSRSLEPTSKLLTCKPVAQDQESLVFLGPKSPLDLQVAQSSLPDSKTIFQDLKTKPPQNSQIVTSRQTQVNISHLEGYSKPEGTPVSADGSQEQSKVSFTTSFGKLSSDAITQITTESPEKTTFSSEIFIHADDRGQGILDPMAQKPSRFASSSSVQQIPASHGKDAQPVLLPYKPSGSSKMYYVPLLKRVPSYLDSKSDTTVESSHSGSNDAIAPDFPPQMLGTRDDDLSNTVNIKHKEGIYSKRAATKGKNPSQKGDAAAPVQMPITWDENVLDENQEEVISRGVVIKMAGPEEMSSLEKDLAGPSDITVQDRKTENLPDTKSIKQKEGSLEIESECHSAFENTAHSVFRSAKFYFHHPVHLPHEQDFCHESLGRSVFMQHSWKDFFHHHSGHSCLPPPGPSSDKLDKTKMDYTRIKSLSINLNLGEHEKIHTIKNQARDPKGKRQANEQKKDQKVTPELTTECPVSLNELWNRYQERQKQQNPSGACDTKELSLVERLDRLAKLLQNPITHSLRASESAQDDSRGGHRAREWTGRRQQKQKGKQHRKWSKSLERGQSTGDFRKSKVFSPHQGGKSSQFKIEQIKLDKYILRKEPGFNNVSNTSLDSRPSEESVSLTDSPNIFSSTDSPVDSDVLTPTDRDMPLNERSSSISTIDTVRLIQAFGQDRLSLSPRRIKLYSTVTSQRRRYLEQPCKHNRKALNTACPQMTSEHSRRRHIQVANHMTSSDSVSSPGSLLSLDSALSNEETVRMVSKGVQAGNLEIVAGVKKYTQDVGVTFPTPSSSEARLEEDSDVTSSSEEKAKEKKFLSNYLQTKNLRKNKPNPCAGVSWFVPVESGQSGSKKENLPKIYRPVISWFEPVTKTKPWREPLREQNWQAQCMNSRGSLGGPGRDSGQVSLRPFVRATLQESLQLHRPDFISHSGERIKRLKLLVQERKLQSLFQSEREALFHSARPLPRRVLLAVQKNKPIGKKEMIQRTRRIYEQLPEVKKKREEEKRKSEYKSYWLRAQHYKMKVTNHLLGRKVPWD.

The span at 1–26 shows a compositional bias: acidic residues; the sequence is MEPEDLPWPDELEEEEEEEEEEGEEE. A disordered region spans residues 1 to 116; sequence MEPEDLPWPD…PPPPLSPRLR (116 aa). Over residues 34 to 47 the composition is skewed to low complexity; that stretch reads NASAAATEEALTSE. The segment covering 99 to 112 has biased composition (pro residues); that stretch reads LPPPTPPPPPPPLS. S401 carries the phosphoserine modification. 17 consecutive repeat copies span residues 440–485, 486–534, 540–587, 588–638, 639–684, 685–731, 732–777, 778–824, 825–871, 872–917, 918–959, 960–1005, 1006–1048, 1115–1163, 1164–1208, 1269–1314, and 1315–1362. The tract at residues 440–1362 is 17 X 47 AA approximate tandem repeat; the sequence is QEELPDRHLN…HSEKHQLISE (923 aa). Residues 615–686 are disordered; it reads FESGPAGQKS…AEKPVSPYQL (72 aa). Residues 963–986 are disordered; that stretch reads MSDSQRTKGHKESDVPGPTDQKTG. Disordered regions lie at residues 1094-1115 and 1142-1189; these read ADRK…GFHQ and QTPG…SDQK. Basic and acidic residues predominate over residues 1158–1173; the sequence is EKLSDYQKASPHRDLT. A Phosphoserine modification is found at S1305. Phosphoserine is present on residues S1623, S1788, S1916, and S1958. Disordered stretches follow at residues 2421 to 2452, 2464 to 2485, 2659 to 2685, 2738 to 2804, 2822 to 2871, and 3002 to 3027; these read KSDT…RDDD, GIYS…DAAA, IKNQ…TPEL, SLRA…SSQF, FNNV…PLNE, and FPTP…EKAK. Residues 2423–2434 are compositionally biased toward polar residues; the sequence is DTTVESSHSGSN. Basic and acidic residues-rich tracts occupy residues 2659–2681 and 2747–2760; these read IKNQ…DQKV and DDSR…EWTG. A compositionally biased stretch (basic residues) spans 2762–2775; that stretch reads RQQKQKGKQHRKWS. The span at 2823–2854 shows a compositional bias: polar residues; the sequence is NNVSNTSLDSRPSEESVSLTDSPNIFSSTDSP. The tract at residues 3129–3251 is ALMS motif; it reads TLQESLQLHR…HLLGRKVPWD (123 aa).

This sequence belongs to the ALMS1 family. In terms of tissue distribution, ubiquitously expressed.

The protein localises to the cytoplasm. It is found in the cytoskeleton. The protein resides in the microtubule organizing center. It localises to the centrosome. Its subcellular location is the cilium basal body. The protein localises to the spindle pole. Functionally, involved in PCM1-dependent intracellular transport. Required, directly or indirectly, for the localization of NCAPD2 to the proximal ends of centrioles. Required for proper formation and/or maintenance of primary cilia (PC), microtubule-based structures that protrude from the surface of epithelial cells. In Mus musculus (Mouse), this protein is Centrosome-associated protein ALMS1 (Alms1).